We begin with the raw amino-acid sequence, 440 residues long: Beta-1,3-galactosyl-O-glycosyl-glycoprotein beta-1,6-N-acetylglucosaminyltransferase 3 (440 aa).

Over 1-12 (MKMTGWKKKLCR) the chain is Cytoplasmic. A helical; Signal-anchor for type II membrane protein membrane pass occupies residues 13-30 (GHHLWALGCYMLLAVVAL). The Lumenal portion of the chain corresponds to 31–440 (RLSLRLKCDV…RHKAIYGTEL (410 aa)). Asparagine 72 and asparagine 108 each carry an N-linked (GlcNAc...) asparagine glycan. Cystine bridges form between cysteine 73–cysteine 230, cysteine 164–cysteine 384, cysteine 185–cysteine 212, and cysteine 393–cysteine 425.

Belongs to the glycosyltransferase 14 family. Post-translationally, N-glycosylated. In terms of tissue distribution, primarily expressed in mucus-secreting tissues.

The protein resides in the golgi apparatus membrane. The catalysed reaction is a 3-O-[beta-D-galactosyl-(1-&gt;3)-N-acetyl-alpha-D-galactosaminyl]-L-seryl-[protein] + UDP-N-acetyl-alpha-D-glucosamine = 3-O-{beta-D-galactosyl-(1-&gt;3)-[N-acetyl-beta-D-glucosaminyl-(1-&gt;6)]-N-acetyl-alpha-D-galactosaminyl}-L-seryl-[protein] + UDP + H(+). It catalyses the reaction a 3-O-[beta-D-galactosyl-(1-&gt;3)-N-acetyl-alpha-D-galactosaminyl]-L-threonyl-[protein] + UDP-N-acetyl-alpha-D-glucosamine = a 3-O-{beta-D-galactosyl-(1-&gt;3)-[N-acetyl-beta-D-glucosaminyl-(1-&gt;6)]-N-acetyl-alpha-D-galactosaminyl}-L-threonyl-[protein] + UDP + H(+). The enzyme catalyses a beta-D-Gal-(1-&gt;4)-beta-D-GlcNAc-(1-&gt;3)-beta-D-Gal-(1-&gt;4)-beta-D-GlcNAc derivative + UDP-N-acetyl-alpha-D-glucosamine = a beta-D-Gal-(1-&gt;4)-beta-D-GlcNAc-(1-&gt;3)-[beta-D-GlcNAc-(1-&gt;6)]-beta-D-Gal-(1-&gt;4)-N-acetyl-beta-D-glucosaminyl derivative + UDP + H(+). It carries out the reaction 3-O-[N-acetyl-beta-D-glucosaminyl-(1-&gt;3)-N-acetyl-alpha-D-galactosaminyl]-L-seryl-[protein] + UDP-N-acetyl-alpha-D-glucosamine = 3-O-[N-acetyl-beta-D-glucosaminyl-(1-&gt;3)-[N-acetyl-beta-D-glucosaminyl-(1-&gt;6)]-N-acetyl-alpha-D-galactosaminyl]-L-seryl-[protein] + UDP + H(+). The catalysed reaction is a 3-O-[N-acetyl-beta-D-glucosaminyl-(1-&gt;3)-N-acetyl-alpha-D-galactosaminyl]-L-threonyl-[protein] + UDP-N-acetyl-alpha-D-glucosamine = 3-O-[N-acetyl-beta-D-glucosaminyl-(1-&gt;3)-[N-acetyl-beta-D-glucosaminyl-(1-&gt;6)]-N-acetyl-alpha-D-galactosaminyl]-L-threonyl-[protein] + UDP + H(+). The protein operates within protein modification; protein glycosylation. Functionally, glycosyltransferase that can synthesize all known mucin beta 6 N-acetylglucosaminides. Mediates core 2 and core 4 O-glycan branching, 2 important steps in mucin-type biosynthesis. Also has I-branching enzyme activity by converting linear into branched poly-N-acetyllactosaminoglycans, leading to introduce the blood group I antigen during embryonic development. This is Beta-1,3-galactosyl-O-glycosyl-glycoprotein beta-1,6-N-acetylglucosaminyltransferase 3 (GCNT3) from Bos taurus (Bovine).